The sequence spans 78 residues: Conotoxin ArMKLT2-0313 (78 aa).

Positions 1–22 (MKLTCVLIIAVLCLTVCQLITA) are cleaved as a signal peptide. A propeptide spanning residues 23 to 47 (DYLRDKQKYRSVRLRDGMLNFKGSR) is cleaved from the precursor. Gln48 is subject to Pyrrolidone carboxylic acid. Disulfide bonds link Cys49–Cys62, Cys56–Cys67, and Cys61–Cys75.

The protein belongs to the conotoxin O1 superfamily. In terms of tissue distribution, expressed by the venom duct.

The protein resides in the secreted. The protein is Conotoxin ArMKLT2-0313 of Conus arenatus (Sand-dusted cone).